A 475-amino-acid polypeptide reads, in one-letter code: Ribulose bisphosphate carboxylase large chain (475 aa).

A propeptide spanning residues 1–2 (MS) is cleaved from the precursor. Proline 3 carries the N-acetylproline modification. The residue at position 14 (lysine 14) is an N6,N6,N6-trimethyllysine. Substrate-binding residues include asparagine 123 and threonine 173. Catalysis depends on lysine 175, which acts as the Proton acceptor. Lysine 177 serves as a coordination point for substrate. 3 residues coordinate Mg(2+): lysine 201, aspartate 203, and glutamate 204. Lysine 201 carries the post-translational modification N6-carboxylysine. Catalysis depends on histidine 294, which acts as the Proton acceptor. Substrate is bound by residues arginine 295, histidine 327, and serine 379.

Belongs to the RuBisCO large chain family. Type I subfamily. As to quaternary structure, heterohexadecamer of 8 large chains and 8 small chains; disulfide-linked. The disulfide link is formed within the large subunit homodimers. Mg(2+) is required as a cofactor. Post-translationally, the disulfide bond which can form in the large chain dimeric partners within the hexadecamer appears to be associated with oxidative stress and protein turnover.

The protein resides in the plastid. It is found in the chloroplast. It carries out the reaction 2 (2R)-3-phosphoglycerate + 2 H(+) = D-ribulose 1,5-bisphosphate + CO2 + H2O. The enzyme catalyses D-ribulose 1,5-bisphosphate + O2 = 2-phosphoglycolate + (2R)-3-phosphoglycerate + 2 H(+). RuBisCO catalyzes two reactions: the carboxylation of D-ribulose 1,5-bisphosphate, the primary event in carbon dioxide fixation, as well as the oxidative fragmentation of the pentose substrate in the photorespiration process. Both reactions occur simultaneously and in competition at the same active site. The sequence is that of Ribulose bisphosphate carboxylase large chain from Amborella trichopoda.